The primary structure comprises 118 residues: UPF0342 protein BCE_0953 (118 aa).

The protein belongs to the UPF0342 family.

The protein is UPF0342 protein BCE_0953 of Bacillus cereus (strain ATCC 10987 / NRS 248).